The primary structure comprises 446 residues: Questin oxidase (446 aa).

Belongs to the questin oxidase family.

It carries out the reaction questin + NADPH + O2 = demethylsulochrin + NADP(+). Its pathway is secondary metabolite biosynthesis. Its function is as follows. Questin oxidase; part of the gene cluster that mediates the biosynthesis of geodin, an intermediate in the biosynthesis of other natural products. The pathway begins with the synthesis of atrochrysone thioester by the polyketide synthase (PKS) gedC. The atrochrysone carboxyl ACP thioesterase gedB then breaks the thioester bond and releases the atrochrysone carboxylic acid from gedC. The atrochrysone carboxylic acid is then converted to atrochrysone which is further transformed into emodinanthrone. The next step is performed by the emodinanthrone oxygenase gedH that catalyzes the oxidation of emodinanthrone to emodin. Emodin O-methyltransferase encoded probably by gedA then catalyzes methylation of the 8-hydroxy group of emodin to form questin. Ring cleavage of questin by questin oxidase gedK leads to desmethylsulochrin via several intermediates including questin epoxide. Another methylation step probably catalyzed by methyltransferase gedG leads to the formation of sulochrin which is further converted to dihydrogeodin by the sulochrin halogenase gedL. Finally, the dihydrogeodin oxidase gedJ catalyzes the stereospecific phenol oxidative coupling reaction converting dihydrogeodin to geodin. The polypeptide is Questin oxidase (Aspergillus terreus (strain NIH 2624 / FGSC A1156)).